The following is a 555-amino-acid chain: Glucose-6-phosphate isomerase (555 aa).

Catalysis depends on Glu365, which acts as the Proton donor. Active-site residues include His396 and Lys522.

The protein belongs to the GPI family.

It is found in the cytoplasm. It carries out the reaction alpha-D-glucose 6-phosphate = beta-D-fructose 6-phosphate. It functions in the pathway carbohydrate biosynthesis; gluconeogenesis. Its pathway is carbohydrate degradation; glycolysis; D-glyceraldehyde 3-phosphate and glycerone phosphate from D-glucose: step 2/4. Functionally, catalyzes the reversible isomerization of glucose-6-phosphate to fructose-6-phosphate. This is Glucose-6-phosphate isomerase from Psychrobacter arcticus (strain DSM 17307 / VKM B-2377 / 273-4).